Reading from the N-terminus, the 370-residue chain is Glucan endo-1,3-beta-glucosidase (370 aa).

The first 32 residues, Met-1–Ala-32, serve as a signal peptide directing secretion. Position 33 is a pyrrolidone carboxylic acid (Gln-33). Glu-127 acts as the Proton donor in catalysis. The Nucleophile role is filled by Glu-272. The propeptide at Gly-348–Met-370 is removed in mature form. A glycan (N-linked (GlcNAc...) asparagine) is linked at Asn-361.

Belongs to the glycosyl hydrolase 17 family. As to expression, constitutively expressed in seedling roots.

It carries out the reaction Hydrolysis of (1-&gt;3)-beta-D-glucosidic linkages in (1-&gt;3)-beta-D-glucans.. In terms of biological role, implicated in the defense of plants against pathogens. The polypeptide is Glucan endo-1,3-beta-glucosidase (Pisum sativum (Garden pea)).